We begin with the raw amino-acid sequence, 207 residues long: MEKVKAWLIKYKWWIVAAIGGLAAFLLLKNRGGGSGGGGEYMVGSGPVYQQAGSGAVDNTMALAALQANTQLSAQNAQLQAQMDASRLQLETQLNIETLAADNAHYSTQSQLQLGMAQVDLSKYLGDLQSTTSTALAGMQSDTAKYQSNIQLQAENIRANTSLAEIDAQKYIVGKQADIAKYQAKTERRGQDYGFALGLLNFGGKFF.

A helical membrane pass occupies residues 13 to 28; it reads WWIVAAIGGLAAFLLL. The stretch at 64 to 95 forms a coiled coil; it reads AALQANTQLSAQNAQLQAQMDASRLQLETQLN.

Its subcellular location is the virion membrane. In terms of biological role, component of the phage ejection machinery. Pilot protein for the formation of the tube that conducts the genome into the target cell. Probably involved in penetration of the bacterial outer membrane and for making the peptidoglycan layer accessible to the viral transglycosylase. Essential for viral infectivity. This Enterobacteria phage PRD1 (Bacteriophage PRD1) protein is Infectivity protein P11 (XI).